The following is a 626-amino-acid chain: Chaperone protein HtpG (626 aa).

An a; substrate-binding region spans residues 1–339 (MSQNQETRGF…SNDLPLNVSR (339 aa)). Positions 340–555 (EILQDNKITA…NDQMTTQMAK (216 aa)) are b. A c region spans residues 556–626 (LFAAAGQPVP…FIKRINKLLG (71 aa)).

The protein belongs to the heat shock protein 90 family. In terms of assembly, homodimer.

It localises to the cytoplasm. Molecular chaperone. Has ATPase activity. This chain is Chaperone protein HtpG, found in Haemophilus influenzae (strain PittGG).